A 471-amino-acid chain; its full sequence is Glutamate--tRNA ligase (471 aa).

Positions 9-19 (PSPTGYLHVGG) match the 'HIGH' region motif. 4 residues coordinate Zn(2+): Cys-98, Cys-100, Cys-125, and His-127. The 'KMSKS' region motif lies at 237–241 (KLSKR). Lys-240 is an ATP binding site.

This sequence belongs to the class-I aminoacyl-tRNA synthetase family. Glutamate--tRNA ligase type 1 subfamily. In terms of assembly, monomer. Requires Zn(2+) as cofactor.

Its subcellular location is the cytoplasm. The catalysed reaction is tRNA(Glu) + L-glutamate + ATP = L-glutamyl-tRNA(Glu) + AMP + diphosphate. In terms of biological role, catalyzes the attachment of glutamate to tRNA(Glu) in a two-step reaction: glutamate is first activated by ATP to form Glu-AMP and then transferred to the acceptor end of tRNA(Glu). In Shigella flexneri, this protein is Glutamate--tRNA ligase.